The sequence spans 194 residues: FMN-dependent NADH:quinone oxidoreductase (194 aa).

FMN-binding positions include Ser10, 16 to 18, 91 to 94, and 135 to 138; these read SQS, MYNF, and TRGG.

The protein belongs to the azoreductase type 1 family. In terms of assembly, homodimer. FMN is required as a cofactor.

The enzyme catalyses 2 a quinone + NADH + H(+) = 2 a 1,4-benzosemiquinone + NAD(+). The catalysed reaction is N,N-dimethyl-1,4-phenylenediamine + anthranilate + 2 NAD(+) = 2-(4-dimethylaminophenyl)diazenylbenzoate + 2 NADH + 2 H(+). Its function is as follows. Quinone reductase that provides resistance to thiol-specific stress caused by electrophilic quinones. Functionally, also exhibits azoreductase activity. Catalyzes the reductive cleavage of the azo bond in aromatic azo compounds to the corresponding amines. The sequence is that of FMN-dependent NADH:quinone oxidoreductase from Vibrio parahaemolyticus serotype O3:K6 (strain RIMD 2210633).